Reading from the N-terminus, the 107-residue chain is Mitochondrial pyruvate carrier 1 (107 aa).

A run of 2 helical transmembrane segments spans residues 18-39 (YFMSTHFWGPVANWGIPVAALA) and 52-68 (MTLALTLYSCIFMRFAY).

This sequence belongs to the mitochondrial pyruvate carrier (MPC) (TC 2.A.105) family. The functional 150 kDa pyruvate import complex is a heteromer of MPC1 and MPC2.

The protein localises to the mitochondrion inner membrane. Functionally, mediates the uptake of pyruvate into mitochondria. This is Mitochondrial pyruvate carrier 1 (Mpc1) from Drosophila melanogaster (Fruit fly).